The primary structure comprises 282 residues: MTDSTLYFVKAFFLGIIEGLTEFIPVSSTGHLILFGDWINFESGSGKVFEVVIQLGAILAVMWIFRARLWQLIRGTLSGQRQEMLFTRNLLLAFFPAAIIGAIFIKAIKQTFYHPGVVAVTLVLGGLIMLWVERRAPRSDGSASETATEERATAHSLEEISWKQALGVGVAQCLAMIPGTSRSGATIIGGMVAGIQRKTATEFSFFLAMPTMLGAAVYDMYRNIDLLTSHDLGAIAVGFVAAFLSALLVVRAVLRFVANHTYRGFAWYRIALGVVVAAWLAF.

The next 7 membrane-spanning stretches (helical) occupy residues 6 to 26 (LYFVKAFFLGIIEGLTEFIPV), 45 to 65 (SGKVFEVVIQLGAILAVMWIF), 85 to 105 (LFTRNLLLAFFPAAIIGAIFI), 112 to 132 (FYHPGVVAVTLVLGGLIMLWV), 200 to 220 (ATEFSFFLAMPTMLGAAVYDM), 230 to 250 (HDLGAIAVGFVAAFLSALLVV), and 262 to 282 (YRGFAWYRIALGVVVAAWLAF).

Belongs to the UppP family.

It localises to the cell inner membrane. It carries out the reaction di-trans,octa-cis-undecaprenyl diphosphate + H2O = di-trans,octa-cis-undecaprenyl phosphate + phosphate + H(+). Functionally, catalyzes the dephosphorylation of undecaprenyl diphosphate (UPP). Confers resistance to bacitracin. This is Undecaprenyl-diphosphatase from Bordetella avium (strain 197N).